We begin with the raw amino-acid sequence, 468 residues long: ATP synthase subunit beta (468 aa).

153–160 (GGAGVGKT) serves as a coordination point for ATP.

Belongs to the ATPase alpha/beta chains family. In terms of assembly, F-type ATPases have 2 components, CF(1) - the catalytic core - and CF(0) - the membrane proton channel. CF(1) has five subunits: alpha(3), beta(3), gamma(1), delta(1), epsilon(1). CF(0) has three main subunits: a(1), b(2) and c(9-12). The alpha and beta chains form an alternating ring which encloses part of the gamma chain. CF(1) is attached to CF(0) by a central stalk formed by the gamma and epsilon chains, while a peripheral stalk is formed by the delta and b chains.

The protein resides in the cell inner membrane. It catalyses the reaction ATP + H2O + 4 H(+)(in) = ADP + phosphate + 5 H(+)(out). Produces ATP from ADP in the presence of a proton gradient across the membrane. The catalytic sites are hosted primarily by the beta subunits. This chain is ATP synthase subunit beta, found in Nautilia profundicola (strain ATCC BAA-1463 / DSM 18972 / AmH).